An 835-amino-acid chain; its full sequence is Protein translocase subunit SecA (835 aa).

ATP-binding positions include Gln-85, 103 to 107 (GEGKT), and Asp-492. The Zn(2+) site is built by Cys-819, Cys-821, Cys-830, and Cys-831.

This sequence belongs to the SecA family. Monomer and homodimer. Part of the essential Sec protein translocation apparatus which comprises SecA, SecYEG and auxiliary proteins SecDF. Other proteins may also be involved. The cofactor is Zn(2+).

It localises to the cell membrane. It is found in the cytoplasm. It carries out the reaction ATP + H2O + cellular proteinSide 1 = ADP + phosphate + cellular proteinSide 2.. In terms of biological role, part of the Sec protein translocase complex. Interacts with the SecYEG preprotein conducting channel. Has a central role in coupling the hydrolysis of ATP to the transfer of proteins into and across the cell membrane, serving as an ATP-driven molecular motor driving the stepwise translocation of polypeptide chains across the membrane. This chain is Protein translocase subunit SecA, found in Clostridium botulinum (strain ATCC 19397 / Type A).